A 504-amino-acid polypeptide reads, in one-letter code: Histidine ammonia-lyase (504 aa).

Residues 141-143 (ASG) constitute a cross-link (5-imidazolinone (Ala-Gly)). The residue at position 142 (serine 142) is a 2,3-didehydroalanine (Ser).

The protein belongs to the PAL/histidase family. Contains an active site 4-methylidene-imidazol-5-one (MIO), which is formed autocatalytically by cyclization and dehydration of residues Ala-Ser-Gly.

It localises to the cytoplasm. It carries out the reaction L-histidine = trans-urocanate + NH4(+). Its pathway is amino-acid degradation; L-histidine degradation into L-glutamate; N-formimidoyl-L-glutamate from L-histidine: step 1/3. The polypeptide is Histidine ammonia-lyase (Geobacillus thermodenitrificans (strain NG80-2)).